Reading from the N-terminus, the 339-residue chain is Uracil nucleotide/cysteinyl leukotriene receptor (339 aa).

Over 1–36 (MNGLEAALPSLTDNSSLAYSEQCGQETPLENMLFAC) the chain is Extracellular. Asn-14 carries N-linked (GlcNAc...) asparagine glycosylation. Residues 37–57 (FYLLDFILAFVGNALALWLFI) form a helical membrane-spanning segment. The Cytoplasmic portion of the chain corresponds to 58–64 (WDHKSGT). The helical transmembrane segment at 65 to 85 (PANVFLMHLAVADLSCVLVLP) threads the bilayer. Topologically, residues 86 to 105 (TRLVYHFSGNHWPFGEIPCR) are extracellular. An intrachain disulfide couples Cys-104 to Cys-181. A helical membrane pass occupies residues 106–126 (LTGFLFYLNMYASIYFLTCIS). Topologically, residues 127–147 (ADRFLAIVHPVKSLKLRRPLY) are cytoplasmic. A helical membrane pass occupies residues 148-168 (AHLACAFLWIVVAVAMAPLLV). Over 169 to 195 (SPQTVQTNHTVVCLQLYREKASHHALA) the chain is Extracellular. N-linked (GlcNAc...) asparagine glycosylation is present at Asn-176. The helical transmembrane segment at 196 to 216 (SLAVAFTFPFITTVTCYLLII) threads the bilayer. Residues 217–232 (RSLRQGPRIEKHLKNK) lie on the Cytoplasmic side of the membrane. A helical transmembrane segment spans residues 233 to 253 (AVRMIAMVLAIFLICFVPYHI). Residues 254–280 (HRSVYVLHYRGGGTSCAAQRALALGNR) are Extracellular-facing. Residues 281-301 (ITSCLTSLNGALDPVMYFFVA) form a helical membrane-spanning segment. Residues 302 to 339 (EKFRHALCNLLCSKRLTGPPPSFEGKTNESSLSARSEL) lie on the Cytoplasmic side of the membrane.

Belongs to the G-protein coupled receptor 1 family.

The protein localises to the cell membrane. Dual specificity receptor for uracil nucleotides and cysteinyl leukotrienes (CysLTs). Signals through G(i) and inhibition of adenylyl cyclase. May mediate brain damage by nucleotides and CysLTs following ischemia. The protein is Uracil nucleotide/cysteinyl leukotriene receptor of Mus musculus (Mouse).